We begin with the raw amino-acid sequence, 427 residues long: 3-isopropylmalate dehydratase large subunit (427 aa).

Cys308, Cys368, and Cys371 together coordinate [4Fe-4S] cluster.

This sequence belongs to the aconitase/IPM isomerase family. LeuC type 2 subfamily. In terms of assembly, heterodimer of LeuC and LeuD. Requires [4Fe-4S] cluster as cofactor.

It catalyses the reaction (2R,3S)-3-isopropylmalate = (2S)-2-isopropylmalate. The protein operates within amino-acid biosynthesis; L-leucine biosynthesis; L-leucine from 3-methyl-2-oxobutanoate: step 2/4. Its function is as follows. Catalyzes the isomerization between 2-isopropylmalate and 3-isopropylmalate, via the formation of 2-isopropylmaleate. This Geotalea uraniireducens (strain Rf4) (Geobacter uraniireducens) protein is 3-isopropylmalate dehydratase large subunit.